The primary structure comprises 304 residues: uncharacterized protein (304 aa).

Residues 1–25 form the signal peptide; the sequence is MVKTAMLGAVALVIALGGTCGVADA. The 270-residue stretch at 34–303 folds into the GP-PDE domain; that stretch reads PMIVAHRAGT…DSPLAAQQWR (270 aa).

This is an uncharacterized protein from Mycobacterium tuberculosis (strain CDC 1551 / Oshkosh).